A 156-amino-acid polypeptide reads, in one-letter code: Persephin (156 aa).

An N-terminal signal peptide occupies residues 1-21 (MAAGRLRILCLLLLSLHPSLG). Disulfide bonds link cysteine 66–cysteine 124, cysteine 93–cysteine 152, and cysteine 97–cysteine 154.

It belongs to the TGF-beta family. GDNF subfamily. As to quaternary structure, homodimer; disulfide-linked. Interacts with GFRA4 coreceptor and RET: forms a 2:2:2 ternary complex composed of PSPN ligand, GFRA4 and RET receptor.

It localises to the secreted. Growth factor that exhibits neurotrophic activity on mesencephalic dopaminergic and motor neurons. Acts by binding to its coreceptor, GFRA4, leading to autophosphorylation and activation of the RET receptor. The chain is Persephin from Mus musculus (Mouse).